Here is a 381-residue protein sequence, read N- to C-terminus: CD2 homolog (381 aa).

Residues 1–16 (MIIKLIFLICFKIVLS) form the signal peptide. The Extracellular portion of the chain corresponds to 17–208 (INYWVRYNDT…QNYFLENIHT (192 aa)). N-linked (GlcNAc...) asparagine; by host glycosylation is found at Asn-24, Asn-73, Asn-77, Asn-85, Asn-91, Asn-104, Asn-121, Asn-133, Asn-144, Asn-176, Asn-183, and Asn-189. Disulfide bonds link Cys-122-Cys-190 and Cys-129-Cys-173. A helical membrane pass occupies residues 209–229 (LFYMIIFIVSGITISIFISII). Residues 230–381 (TFLSLRKRKK…ISLIHVDRII (152 aa)) lie on the Cytoplasmic side of the membrane. The segment at 243–278 (EIESPPPESNEEEQCQHDDTTSIHEPSPREPLLPKP) is disordered. A compositionally biased stretch (basic and acidic residues) spans 256–270 (QCQHDDTTSIHEPSP). Repeat copies occupy residues 305 to 310 (KPCPPP), 311 to 316 (KPCPPP), 317 to 322 (KPCPPP), 323 to 328 (KPCPPP), 329 to 334 (KPCPPP), 335 to 340 (KPCPPP), and 341 to 346 (KPCPPP). The 7 X 6 AA tandem repeats of K-[LP]-C-[PRS]-[PS]-[PS] stretch occupies residues 305 to 334 (KPCPPPKPCPPPKPCPPPKPCPPPKPCPPP). The interval 341-362 (KPCPPPESYSPPKPLPSIPLLP) is disordered.

It belongs to the asfivirus CD2 homolog protein family. In terms of assembly, both glycosylated and nonglycosylated forms interact (via C-terminus) with the host AP-1 complex. In terms of processing, cleaved into two fragments of 63 kDa and 26 kDa containing respectively the glycosylated N-terminus and the nonglycosylated C-terminus. A full-length 89-kDa glycosylated form also exists.

The protein resides in the host membrane. It is found in the virion membrane. It localises to the host Golgi apparatus. Its function is as follows. May play an immunosuppressive role by inhibiting lymphocyte proliferation and subsequently facilitating viral replication and generalization of infection. Responsible for viral hemadsorption, which may help viral spread. Increases virus replication in the tick vector at the step of virus uptake or replication in the tick gut. May play a role in the host Golgi reorganization to yield viral factories. May play a role in host cell penetration. This chain is CD2 homolog, found in African swine fever virus (isolate Warthog/Namibia/Wart80/1980) (ASFV).